Consider the following 43-residue polypeptide: Protein PsbN (43 aa).

A helical membrane pass occupies residues valine 7–phenylalanine 27.

Belongs to the PsbN family.

It localises to the plastid. The protein localises to the chloroplast thylakoid membrane. May play a role in photosystem I and II biogenesis. The protein is Protein PsbN of Sagittaria latifolia (Broadleaf arrowhead).